A 344-amino-acid polypeptide reads, in one-letter code: Serine proteinase inhibitor 2 (344 aa).

It belongs to the serpin family. Poxviruses subfamily.

It localises to the host cytoplasm. In terms of biological role, viral serpin that inhibits both cysteine and serine proteinases involved in the regulation of host inflammatory and apoptosis processes. Major anti-apoptotic protein which inhibits both intrinsic and extrinsic pathways and strongly cleaves host CASP1 and CASP8 but is a rather poor inhibitor of host CASP3. Prevents the proteolytic activity of host interleukin-1-beta converting enzyme (ICE) and ICE-like enzymes. Can also block apoptosis through host tumor necrosis factor (TNF) receptor. The inhibition of host ICE is an example of a 'cross-class' interaction, in which a serpin inhibits a non-serine proteinase. Also inhibits granzyme B. The sequence is that of Serine proteinase inhibitor 2 (OPG199) from Homo sapiens (Human).